A 176-amino-acid polypeptide reads, in one-letter code: Inorganic pyrophosphatase (176 aa).

Residues K30, R44, and Y56 each contribute to the substrate site. Positions 66, 71, and 103 each coordinate Mg(2+). Y142 lines the substrate pocket.

The protein belongs to the PPase family. In terms of assembly, homohexamer. It depends on Mg(2+) as a cofactor.

The protein resides in the cytoplasm. The catalysed reaction is diphosphate + H2O = 2 phosphate + H(+). Catalyzes the hydrolysis of inorganic pyrophosphate (PPi) forming two phosphate ions. The polypeptide is Inorganic pyrophosphatase (Brucella melitensis biotype 1 (strain ATCC 23456 / CCUG 17765 / NCTC 10094 / 16M)).